We begin with the raw amino-acid sequence, 96 residues long: NADH-ubiquinone oxidoreductase chain 6 (96 aa).

2 consecutive transmembrane segments (helical) span residues 24–44 (MSLLLLLLIMSLCAVLWLGSI) and 48–68 (WFAYILFIVYIGGILVLFIYV).

Belongs to the complex I subunit 6 family.

It localises to the mitochondrion membrane. The enzyme catalyses a ubiquinone + NADH + 5 H(+)(in) = a ubiquinol + NAD(+) + 4 H(+)(out). Functionally, core subunit of the mitochondrial membrane respiratory chain NADH dehydrogenase (Complex I) that is believed to belong to the minimal assembly required for catalysis. Complex I functions in the transfer of electrons from NADH to the respiratory chain. The immediate electron acceptor for the enzyme is believed to be ubiquinone. In Albinaria turrita (Door snail), this protein is NADH-ubiquinone oxidoreductase chain 6 (ND6).